Consider the following 449-residue polypeptide: Phosphoglucosamine mutase (449 aa).

The active-site Phosphoserine intermediate is the S104. Residues S104, D243, D245, and D247 each coordinate Mg(2+). Phosphoserine is present on S104.

Belongs to the phosphohexose mutase family. The cofactor is Mg(2+). Activated by phosphorylation.

The catalysed reaction is alpha-D-glucosamine 1-phosphate = D-glucosamine 6-phosphate. Its function is as follows. Catalyzes the conversion of glucosamine-6-phosphate to glucosamine-1-phosphate. The sequence is that of Phosphoglucosamine mutase from Xanthomonas euvesicatoria pv. vesicatoria (strain 85-10) (Xanthomonas campestris pv. vesicatoria).